The chain runs to 23 residues: Cytochrome c oxidase subunit 7A-liver, mitochondrial (23 aa).

The protein belongs to the cytochrome c oxidase VIIa family. In terms of assembly, component of the cytochrome c oxidase (complex IV, CIV), a multisubunit enzyme composed of 14 subunits. The complex is composed of a catalytic core of 3 subunits MT-CO1, MT-CO2 and MT-CO3, encoded in the mitochondrial DNA, and 11 supernumerary subunits COX4I, COX5A, COX5B, COX6A, COX6B, COX6C, COX7A, COX7B, COX7C, COX8 and NDUFA4, which are encoded in the nuclear genome. The complex exists as a monomer or a dimer and forms supercomplexes (SCs) in the inner mitochondrial membrane with NADH-ubiquinone oxidoreductase (complex I, CI) and ubiquinol-cytochrome c oxidoreductase (cytochrome b-c1 complex, complex III, CIII), resulting in different assemblies (supercomplex SCI(1)III(2)IV(1) and megacomplex MCI(2)III(2)IV(2)).

It localises to the mitochondrion inner membrane. It participates in energy metabolism; oxidative phosphorylation. Its function is as follows. Component of the cytochrome c oxidase, the last enzyme in the mitochondrial electron transport chain which drives oxidative phosphorylation. The respiratory chain contains 3 multisubunit complexes succinate dehydrogenase (complex II, CII), ubiquinol-cytochrome c oxidoreductase (cytochrome b-c1 complex, complex III, CIII) and cytochrome c oxidase (complex IV, CIV), that cooperate to transfer electrons derived from NADH and succinate to molecular oxygen, creating an electrochemical gradient over the inner membrane that drives transmembrane transport and the ATP synthase. Cytochrome c oxidase is the component of the respiratory chain that catalyzes the reduction of oxygen to water. Electrons originating from reduced cytochrome c in the intermembrane space (IMS) are transferred via the dinuclear copper A center (CU(A)) of subunit 2 and heme A of subunit 1 to the active site in subunit 1, a binuclear center (BNC) formed by heme A3 and copper B (CU(B)). The BNC reduces molecular oxygen to 2 water molecules using 4 electrons from cytochrome c in the IMS and 4 protons from the mitochondrial matrix. The sequence is that of Cytochrome c oxidase subunit 7A-liver, mitochondrial from Oncorhynchus mykiss (Rainbow trout).